The following is a 612-amino-acid chain: Dihydroxy-acid dehydratase (612 aa).

Asp-81 contributes to the Mg(2+) binding site. Cys-122 contributes to the [2Fe-2S] cluster binding site. Asp-123 and Lys-124 together coordinate Mg(2+). Lys-124 carries the post-translational modification N6-carboxylysine. Position 193 (Cys-193) interacts with [2Fe-2S] cluster. Glu-489 lines the Mg(2+) pocket. Ser-515 acts as the Proton acceptor in catalysis.

Belongs to the IlvD/Edd family. In terms of assembly, homodimer. The cofactor is [2Fe-2S] cluster. Mg(2+) is required as a cofactor.

The catalysed reaction is (2R)-2,3-dihydroxy-3-methylbutanoate = 3-methyl-2-oxobutanoate + H2O. The enzyme catalyses (2R,3R)-2,3-dihydroxy-3-methylpentanoate = (S)-3-methyl-2-oxopentanoate + H2O. The protein operates within amino-acid biosynthesis; L-isoleucine biosynthesis; L-isoleucine from 2-oxobutanoate: step 3/4. It participates in amino-acid biosynthesis; L-valine biosynthesis; L-valine from pyruvate: step 3/4. In terms of biological role, functions in the biosynthesis of branched-chain amino acids. Catalyzes the dehydration of (2R,3R)-2,3-dihydroxy-3-methylpentanoate (2,3-dihydroxy-3-methylvalerate) into 2-oxo-3-methylpentanoate (2-oxo-3-methylvalerate) and of (2R)-2,3-dihydroxy-3-methylbutanoate (2,3-dihydroxyisovalerate) into 2-oxo-3-methylbutanoate (2-oxoisovalerate), the penultimate precursor to L-isoleucine and L-valine, respectively. This is Dihydroxy-acid dehydratase from Stutzerimonas stutzeri (strain A1501) (Pseudomonas stutzeri).